Here is a 227-residue protein sequence, read N- to C-terminus: Fibrillarin-like rRNA/tRNA 2'-O-methyltransferase (227 aa).

S-adenosyl-L-methionine-binding positions include 82–83 (TT), 100–101 (EF), 125–126 (DA), and 145–148 (DVAQ).

This sequence belongs to the methyltransferase superfamily. Fibrillarin family. Interacts with nop5. Component of box C/D small ribonucleoprotein (sRNP) particles that contain rpl7ae, FlpA and nop5, plus a guide RNA.

Involved in pre-rRNA and tRNA processing. Utilizes the methyl donor S-adenosyl-L-methionine to catalyze the site-specific 2'-hydroxyl methylation of ribose moieties in rRNA and tRNA. Site specificity is provided by a guide RNA that base pairs with the substrate. Methylation occurs at a characteristic distance from the sequence involved in base pairing with the guide RNA. This chain is Fibrillarin-like rRNA/tRNA 2'-O-methyltransferase, found in Methanosarcina acetivorans (strain ATCC 35395 / DSM 2834 / JCM 12185 / C2A).